An 85-amino-acid chain; its full sequence is Oxytocin-neurophysin 1 (85 aa).

Glycine 3 is modified (glycine amide). Disulfide bonds link cysteine 16–cysteine 60, cysteine 19–cysteine 33, cysteine 27–cysteine 50, cysteine 34–cysteine 40, cysteine 67–cysteine 79, and cysteine 80–cysteine 85.

This sequence belongs to the vasopressin/oxytocin family. In terms of assembly, interacts with oxytocin receptor (Ki=1.5 nM). Interacts with vasopressin V1aR/AVPR1A (Ki=37 nM), V1bR/AVPR1B (Ki=222 nM), and V2R/AVPR2 receptors (Ki=823 nM).

In terms of biological role, neurophysin 1 specifically binds oxytocin. Its function is as follows. Oxytocin causes contraction of the smooth muscle of the uterus and of the mammary gland. Acts by binding to oxytocin receptor (OXTR). The protein is Oxytocin-neurophysin 1 (OXT) of Papio hamadryas (Hamadryas baboon).